The primary structure comprises 198 residues: Probable GTP-binding protein EngB (198 aa).

Residues 22–195 form the EngB-type G domain; that stretch reads DLPEIALAGR…WKAIHKMTKT (174 aa). GTP contacts are provided by residues 30–37, 57–61, 75–78, 142–145, and 174–176; these read GRSNVGKS, GKTQT, DVPG, TKAD, and FSS. Mg(2+) is bound by residues Ser37 and Thr59.

The protein belongs to the TRAFAC class TrmE-Era-EngA-EngB-Septin-like GTPase superfamily. EngB GTPase family. It depends on Mg(2+) as a cofactor.

Functionally, necessary for normal cell division and for the maintenance of normal septation. This is Probable GTP-binding protein EngB from Bacillus cereus (strain G9842).